The sequence spans 109 residues: Fluoride-specific ion channel FluC (109 aa).

3 helical membrane passes run 21–41 (LTLN…GFFV), 52–72 (ILFS…YFLY), and 84–104 (IIFF…GFWI).

The protein belongs to the fluoride channel Fluc/FEX (TC 1.A.43) family.

Its subcellular location is the cell inner membrane. The catalysed reaction is fluoride(in) = fluoride(out). Functionally, fluoride-specific ion channel. Important for reducing fluoride concentration in the cell, thus reducing its toxicity. This is Fluoride-specific ion channel FluC from Prochlorococcus marinus (strain MIT 9301).